A 347-amino-acid chain; its full sequence is Quinolinate synthase (347 aa).

Residues H47 and S68 each coordinate iminosuccinate. C113 is a [4Fe-4S] cluster binding site. Residues 139–141 (YAN) and S156 each bind iminosuccinate. [4Fe-4S] cluster is bound at residue C200. Residues 226 to 228 (HPE) and T243 contribute to the iminosuccinate site. Position 297 (C297) interacts with [4Fe-4S] cluster.

The protein belongs to the quinolinate synthase family. Type 1 subfamily. The cofactor is [4Fe-4S] cluster.

Its subcellular location is the cytoplasm. The enzyme catalyses iminosuccinate + dihydroxyacetone phosphate = quinolinate + phosphate + 2 H2O + H(+). It participates in cofactor biosynthesis; NAD(+) biosynthesis; quinolinate from iminoaspartate: step 1/1. Functionally, catalyzes the condensation of iminoaspartate with dihydroxyacetone phosphate to form quinolinate. The sequence is that of Quinolinate synthase from Salmonella paratyphi A (strain ATCC 9150 / SARB42).